The primary structure comprises 130 residues: Small ribosomal subunit protein uS8 (130 aa).

The protein belongs to the universal ribosomal protein uS8 family. Part of the 30S ribosomal subunit. Contacts proteins S5 and S12.

One of the primary rRNA binding proteins, it binds directly to 16S rRNA central domain where it helps coordinate assembly of the platform of the 30S subunit. This is Small ribosomal subunit protein uS8 from Actinobacillus succinogenes (strain ATCC 55618 / DSM 22257 / CCUG 43843 / 130Z).